We begin with the raw amino-acid sequence, 620 residues long: MTLDISKYPHLALANTPDELRLLPVESLPEVCDELRTYLLNSVSQSSGHFASGLGAVELTVALHHVYNTPFDHLIWDVGHQAYPHKILTGRRDQMSTIRQKDGIHPFPWRGESEYDVLSVGHSSTSISAGLGMAIAANKEGLGRKVVSVIGDGAITAGMAFEAMNHAGDVHSDMLVILNDNEMSISENVGALNNHLARLLSGSLYTTIREGGKKVLAGAPPIKELVKRAEEHIKGMVVPGTMFEELGFNYIGPVDGHDVTELVKTLKNMRNLKGPQFLHIMTKKGKGYAPAEADPINYHAVPKFDLSQNPLPKAANAKPTFSKIFGDWLCDMAAEDEKLMAITPAMREGSGMVRFSKEYPSQYFDVAIAEQHAVTLASGMAIGGYNPIVAIYSTFLQRGYDQLIHDVAIMELPVMFAIDRGGLVGADGQTHQGAFDLSFMRCIPNIVIMAPSDENECRQMLYTGHKHQGPSAVRYPRGNGLGAEIQKEMTALEIGKGIIRRQGEKIAILNFGTMLEYALEAAEKLNATVADMRFVKPLDEELILELAANHDVLVTVEENAIAGGAGSGVIEFMMKSKCLKPVLNIGLPDRFVEQGTQQELHTALEIDAAGIEKKIRDYIA.

Residues histidine 80 and 121 to 123 (GHS) contribute to the thiamine diphosphate site. Aspartate 152 serves as a coordination point for Mg(2+). Residues 153–154 (GA), asparagine 181, tyrosine 288, and glutamate 370 each bind thiamine diphosphate. Position 181 (asparagine 181) interacts with Mg(2+).

It belongs to the transketolase family. DXPS subfamily. Homodimer. It depends on Mg(2+) as a cofactor. The cofactor is thiamine diphosphate.

The enzyme catalyses D-glyceraldehyde 3-phosphate + pyruvate + H(+) = 1-deoxy-D-xylulose 5-phosphate + CO2. It functions in the pathway metabolic intermediate biosynthesis; 1-deoxy-D-xylulose 5-phosphate biosynthesis; 1-deoxy-D-xylulose 5-phosphate from D-glyceraldehyde 3-phosphate and pyruvate: step 1/1. In terms of biological role, catalyzes the acyloin condensation reaction between C atoms 2 and 3 of pyruvate and glyceraldehyde 3-phosphate to yield 1-deoxy-D-xylulose-5-phosphate (DXP). In Photobacterium profundum (strain SS9), this protein is 1-deoxy-D-xylulose-5-phosphate synthase.